Consider the following 128-residue polypeptide: Regulator of ribonuclease activity B (128 aa).

It belongs to the RraB family. As to quaternary structure, interacts with the C-terminal region of Rne.

Its subcellular location is the cytoplasm. Functionally, globally modulates RNA abundance by binding to RNase E (Rne) and regulating its endonucleolytic activity. Can modulate Rne action in a substrate-dependent manner by altering the composition of the degradosome. This Idiomarina loihiensis (strain ATCC BAA-735 / DSM 15497 / L2-TR) protein is Regulator of ribonuclease activity B.